The chain runs to 159 residues: SsrA-binding protein (159 aa).

Over residues 140–150 (RATEKERDWNR) the composition is skewed to basic and acidic residues. The interval 140-159 (RATEKERDWNRQKQRVLRQR) is disordered.

This sequence belongs to the SmpB family.

The protein localises to the cytoplasm. Its function is as follows. Required for rescue of stalled ribosomes mediated by trans-translation. Binds to transfer-messenger RNA (tmRNA), required for stable association of tmRNA with ribosomes. tmRNA and SmpB together mimic tRNA shape, replacing the anticodon stem-loop with SmpB. tmRNA is encoded by the ssrA gene; the 2 termini fold to resemble tRNA(Ala) and it encodes a 'tag peptide', a short internal open reading frame. During trans-translation Ala-aminoacylated tmRNA acts like a tRNA, entering the A-site of stalled ribosomes, displacing the stalled mRNA. The ribosome then switches to translate the ORF on the tmRNA; the nascent peptide is terminated with the 'tag peptide' encoded by the tmRNA and targeted for degradation. The ribosome is freed to recommence translation, which seems to be the essential function of trans-translation. This Alcanivorax borkumensis (strain ATCC 700651 / DSM 11573 / NCIMB 13689 / SK2) protein is SsrA-binding protein.